The sequence spans 209 residues: GTP cyclohydrolase 1 (209 aa).

Zn(2+) is bound by residues C100, H103, and C171.

It belongs to the GTP cyclohydrolase I family. Toroid-shaped homodecamer, composed of two pentamers of five dimers.

It carries out the reaction GTP + H2O = 7,8-dihydroneopterin 3'-triphosphate + formate + H(+). It functions in the pathway cofactor biosynthesis; 7,8-dihydroneopterin triphosphate biosynthesis; 7,8-dihydroneopterin triphosphate from GTP: step 1/1. The protein is GTP cyclohydrolase 1 of Ralstonia nicotianae (strain ATCC BAA-1114 / GMI1000) (Ralstonia solanacearum).